A 450-amino-acid chain; its full sequence is Putative serine/threonine-protein kinase R517/R518 (450 aa).

A Protein kinase domain is found at 9–290 (KMTDTVLGKG…WSELFHHYWF (282 aa)). ATP-binding positions include 15–23 (LGKGGFSEV) and Lys-38. Catalysis depends on Asp-140, which acts as the Proton acceptor.

It belongs to the protein kinase superfamily. Ser/Thr protein kinase family.

The catalysed reaction is L-seryl-[protein] + ATP = O-phospho-L-seryl-[protein] + ADP + H(+). The enzyme catalyses L-threonyl-[protein] + ATP = O-phospho-L-threonyl-[protein] + ADP + H(+). The chain is Putative serine/threonine-protein kinase R517/R518 from Acanthamoeba polyphaga mimivirus (APMV).